Reading from the N-terminus, the 259-residue chain is Protein unc-50 homolog A (259 aa).

The Cytoplasmic segment spans residues 1–82; that stretch reads MLPTTSVSPR…TKDQWARDDP (82 aa). A helical transmembrane segment spans residues 83-103; that stretch reads AFLVLLSIWLCVSTVGFGFVL. The Lumenal portion of the chain corresponds to 104-112; the sequence is DMSFFETFK. Residues 113–133 traverse the membrane as a helical segment; the sequence is LLLWVVFIDCVGVGLLIATLM. Residues 134-158 lie on the Cytoplasmic side of the membrane; that stretch reads WFVSNKYMVKRQGKDYDVEWGYTFD. The helical transmembrane segment at 159-179 threads the bilayer; the sequence is VHLNAFYPLLVILHFIQLFFI. The Lumenal portion of the chain corresponds to 180–181; sequence NH. The helical transmembrane segment at 182-202 threads the bilayer; the sequence is VILSGWFIGYFVGNTIWLIAI. Topologically, residues 203–222 are cytoplasmic; it reads GYYIYITFLGYSALPFLKNT. The chain crosses the membrane as a helical span at residues 223-243; sequence VILLYPFAALALLYVLSLALG. Residues 244–259 lie on the Lumenal side of the membrane; the sequence is WNFTEKLCLFYKYRVR.

It belongs to the unc-50 family.

The protein localises to the nucleus inner membrane. Its subcellular location is the golgi apparatus membrane. In terms of biological role, involved in the cell surface expression of neuronal nicotinic receptors. Binds RNA. The protein is Protein unc-50 homolog A (unc50-a) of Xenopus laevis (African clawed frog).